Consider the following 125-residue polypeptide: Small ribosomal subunit protein eS25 (125 aa).

Residues 1-23 (MPPKDDKKKKDAGKSAKKDKDPV) are compositionally biased toward basic and acidic residues. The interval 1 to 38 (MPPKDDKKKKDAGKSAKKDKDPVNKSGGKAKKKKWSKG) is disordered. Basic residues predominate over residues 28–38 (GKAKKKKWSKG). K43 is subject to N6-acetyllysine. The residue at position 52 (K52) is an N6-acetyllysine; alternate. K52 is subject to N6-succinyllysine; alternate. K60 and K66 each carry N6-acetyllysine. K94 is subject to N6-acetyllysine; alternate. Residue K94 is modified to N6-succinyllysine; alternate.

It belongs to the eukaryotic ribosomal protein eS25 family. As to quaternary structure, component of the small ribosomal subunit.

It localises to the cytoplasm. Component of the small ribosomal subunit. The ribosome is a large ribonucleoprotein complex responsible for the synthesis of proteins in the cell. The chain is Small ribosomal subunit protein eS25 (RPS25) from Homo sapiens (Human).